Consider the following 544-residue polypeptide: ATP-dependent RNA helicase DBP9 (544 aa).

A Q motif motif is present at residues 9 to 37 (KSFDSFGLDDRLLSGLAACDMKQPTLIQN). The Helicase ATP-binding domain maps to 41–214 (PLALDKGVDI…QQFCRSTVAS (174 aa)). Residue 54–61 (AVTGSGKT) coordinates ATP. The DEAD box signature appears at 162–165 (DEAD). One can recognise a Helicase C-terminal domain in the interval 225–430 (KLLQYYVKCS…PYSFDMKQVE (206 aa)). The tract at residues 525 to 544 (HKKYTKKKKGGDPLKFKKRK) is disordered. Positions 534-544 (GGDPLKFKKRK) are enriched in basic and acidic residues.

This sequence belongs to the DEAD box helicase family. DDX56/DBP9 subfamily.

Its subcellular location is the nucleus. The protein resides in the nucleolus. The enzyme catalyses ATP + H2O = ADP + phosphate + H(+). Functionally, ATP-binding RNA helicase involved in the biogenesis of 60S ribosomal subunits and is required for the normal formation of 25S and 5.8S rRNAs. The sequence is that of ATP-dependent RNA helicase DBP9 (DBP9) from Yarrowia lipolytica (strain CLIB 122 / E 150) (Yeast).